The primary structure comprises 99 residues: Nucleoid-associated protein str1598 (99 aa).

It belongs to the YbaB/EbfC family. In terms of assembly, homodimer.

The protein resides in the cytoplasm. Its subcellular location is the nucleoid. Binds to DNA and alters its conformation. May be involved in regulation of gene expression, nucleoid organization and DNA protection. The protein is Nucleoid-associated protein str1598 of Streptococcus thermophilus (strain CNRZ 1066).